The primary structure comprises 183 residues: MQNSQAESWHGTTILTVRKGGRVVIGGDGQVSIGQTVIKSNARKVRKLGKGDVIGGFAGATADAFTLFERLEAKLEQYPGQLTRACVELAKDWRTDRYLRRLEAMMIVADKEVSLVLTGTGDVLEPEDGVMAIGSGGNYALAAARALSDSEHDAETIVRRSLEIAADICVYTNRNVTIEALTA.

The active site involves Thr-12. 3 residues coordinate Na(+): Ala-166, Cys-169, and Thr-172.

This sequence belongs to the peptidase T1B family. HslV subfamily. As to quaternary structure, a double ring-shaped homohexamer of HslV is capped on each side by a ring-shaped HslU homohexamer. The assembly of the HslU/HslV complex is dependent on binding of ATP.

It is found in the cytoplasm. The catalysed reaction is ATP-dependent cleavage of peptide bonds with broad specificity.. Its activity is regulated as follows. Allosterically activated by HslU binding. Its function is as follows. Protease subunit of a proteasome-like degradation complex believed to be a general protein degrading machinery. The chain is ATP-dependent protease subunit HslV from Afipia carboxidovorans (strain ATCC 49405 / DSM 1227 / KCTC 32145 / OM5) (Oligotropha carboxidovorans).